A 376-amino-acid polypeptide reads, in one-letter code: Alanine racemase (376 aa).

Lysine 36 serves as the catalytic Proton acceptor; specific for D-alanine. At lysine 36 the chain carries N6-(pyridoxal phosphate)lysine. Arginine 134 lines the substrate pocket. Residue tyrosine 266 is the Proton acceptor; specific for L-alanine of the active site. Residue methionine 314 coordinates substrate.

It belongs to the alanine racemase family. Requires pyridoxal 5'-phosphate as cofactor.

It catalyses the reaction L-alanine = D-alanine. The protein operates within amino-acid biosynthesis; D-alanine biosynthesis; D-alanine from L-alanine: step 1/1. Functionally, catalyzes the interconversion of L-alanine and D-alanine. May also act on other amino acids. In Nitratidesulfovibrio vulgaris (strain ATCC 29579 / DSM 644 / CCUG 34227 / NCIMB 8303 / VKM B-1760 / Hildenborough) (Desulfovibrio vulgaris), this protein is Alanine racemase (alr).